A 173-amino-acid polypeptide reads, in one-letter code: Large ribosomal subunit protein uL10 (173 aa).

This sequence belongs to the universal ribosomal protein uL10 family. In terms of assembly, part of the ribosomal stalk of the 50S ribosomal subunit. The N-terminus interacts with L11 and the large rRNA to form the base of the stalk. The C-terminus forms an elongated spine to which L12 dimers bind in a sequential fashion forming a multimeric L10(L12)X complex.

In terms of biological role, forms part of the ribosomal stalk, playing a central role in the interaction of the ribosome with GTP-bound translation factors. This chain is Large ribosomal subunit protein uL10, found in Geobacter sp. (strain M21).